A 311-amino-acid chain; its full sequence is Progestin and adipoQ receptor family member 3 (311 aa).

The required for interaction with SREBF2 stretch occupies residues 1–20 (MHQKLLKSAHYIELGSYQYW). Residues 1–73 (MHQKLLKSAH…FILSNETVNI (73 aa)) are Cytoplasmic-facing. A required for interaction with SCAP region spans residues 41 to 60 (KDNPYITDGYRAYLPSRLCI). A golgi targeting region spans residues 61–71 (KSLFILSNETV). A helical membrane pass occupies residues 74–96 (WSHLLGFFLFFTLGIYDMTSVLP). Over 97–105 (SASASREDF) the chain is Lumenal. The helical transmembrane segment at 106 to 128 (VICSICLFCFQVCMLCSVGYHLF) threads the bilayer. At 129 to 140 (SCHRSEKTCRRW) the chain is on the cytoplasmic side. A helical membrane pass occupies residues 141–163 (MALDYAGISIGILGCYVSGVFYA). The Lumenal portion of the chain corresponds to 164–172 (FYCNNYWRQ). A helical membrane pass occupies residues 173-195 (VYLITVLAMILAVFFAQIHPNYL). At 196-201 (TQQWQR) the chain is on the cytoplasmic side. The helical transmembrane segment at 202 to 224 (LRSIIFCSVSGYGVIPTLHWVWL) threads the bilayer. Residues 225–238 (NGGIGAPIVQDFAP) lie on the Lumenal side of the membrane. A helical membrane pass occupies residues 239 to 256 (RVIVMYMIALLAFLFYIS). At 257–275 (KVPERYFPGQLNYLGSSHQ) the chain is on the cytoplasmic side. The helical transmembrane segment at 276-298 (IWHILAVVMLYWWHQSTVYVMQY) threads the bilayer. Positions 299-303 (RHSKP) are golgi targeting. At 299-311 (RHSKPCPDYVSHL) the chain is on the lumenal side.

It belongs to the ADIPOR family. As to quaternary structure, interacts with SCAP and SREBF2; the interactions are direct, increase in low cholesterol conditions and tether SCAP:SREBP complex to the Golgi apparatus. Interaction with SCAP is mutually exclusive with INSIG1. In hepatocytes, interacts with PPARA and HUWE1; the interactions promote PPARA poylubiquitination and HUWE1-mediated degradation. In macrophages, interacts with PPARG and STUB1; the interactions promote PPARG poylubiquitination and STUB1-mediated degradation. Widely expressed in a range of tissues.

It is found in the golgi apparatus membrane. Functionally, golgi-scaffold protein which modulates its interactors acitivies by anchoring them to the Golgi apparatus. Functions as a spatial regulator of RAF1 kinase by sequestrating it to the Golgi apparatus. Acts as a positive regulator of cholesterol biosynthesis by mediating the anchoring of the SCAP:SREBP complex in the Golgi apparatus, thereby promoting SCAP:SREBF2 complex formation, potentiating SREBF2 and SREBF1 processing and enhancing lipid synthesis. Also regulates PPARA and PPARG functions by mediating their interaction with E3 ubiquitin ligases, such as STUB1 or HUWE1, leading to their polyubiquitination and proteasome-mediated degradation. The sequence is that of Progestin and adipoQ receptor family member 3 from Homo sapiens (Human).